The chain runs to 444 residues: E1B 55 kDa protein (444 aa).

The disordered stretch occupies residues 1-42 (MEQDSDLESGRATNQRPPRVRVRGAGVRGRGRVRRRALSEGQ). Phosphoserine occurs at positions 438 and 439.

Belongs to the adenoviridae E1B 55 kDa protein family. As to quaternary structure, interacts with host PML-4 and PML-5; this interaction promotes efficient subnuclear targeting of E1B-55K to PML nuclear bodies. Interacts with E4-ORF3 protein. Interacts with E4-ORF6 protein.

Its subcellular location is the host nucleus. It is found in the host cytoplasm. Its function is as follows. Plays a major role to prevent cellular inhibition of viral genome replication. Assembles an SCF-like E3 ubiquitin ligase complex based on the cellular proteins ELOB, ELOC, CUL5 and RBX1, in cooperation with viral E4orf6. This viral RING-type ligase ubiquitinates cellular substrates and targets them to proteasomal degradation: TP53/p53, LIG4, MRE11-RAD50-NBS1 (MRN) complex, ITGA3, DAXX and BLM. E1B-55K probably acts as the substrate-specific adapter of the SCF-like E3 ubiquitin ligase complex. Degradation of host TP53/p53 activity is essential for preventing E1A-induced TP53 accumulation that would otherwise lead to cell apoptosis and growth arrest. E1B-55K also inactivates TP53 transcription-factor activity by binding its transactivation domain. E1B-55K also functions as a SUMO1 E3 ligase for TP53 which causes the latter to be sequestered in promyelocytic leukemia (PML) nuclear bodies thereby contributing to maximal inhibition of TP53 function. The protein is E1B 55 kDa protein of Canis lupus familiaris (Dog).